Consider the following 150-residue polypeptide: Deoxyuridine 5'-triphosphate nucleotidohydrolase (150 aa).

Substrate-binding positions include Arg69 to Gly71, Asn82, and Thr86 to Asp88.

The protein belongs to the dUTPase family. The cofactor is Mg(2+).

The catalysed reaction is dUTP + H2O = dUMP + diphosphate + H(+). Its pathway is pyrimidine metabolism; dUMP biosynthesis; dUMP from dCTP (dUTP route): step 2/2. This enzyme is involved in nucleotide metabolism: it produces dUMP, the immediate precursor of thymidine nucleotides and it decreases the intracellular concentration of dUTP so that uracil cannot be incorporated into DNA. This Syntrophus aciditrophicus (strain SB) protein is Deoxyuridine 5'-triphosphate nucleotidohydrolase.